Here is a 122-residue protein sequence, read N- to C-terminus: Phospholipase A2 crotoxin basic chain (122 aa).

7 disulfide bridges follow: C26/C115, C28/C44, C43/C95, C49/C122, C50/C88, C57/C81, and C75/C86. Positions 27, 29, and 31 each coordinate Ca(2+). H47 is an active-site residue. D48 lines the Ca(2+) pocket. The active site involves D89.

In terms of assembly, heterodimer of one acidic (CA also named crotapotin) and one basic (CB) subunits; non-covalently linked. The cofactor is Ca(2+). In terms of tissue distribution, expressed by the venom gland.

The protein localises to the secreted. It carries out the reaction a 1,2-diacyl-sn-glycero-3-phosphocholine + H2O = a 1-acyl-sn-glycero-3-phosphocholine + a fatty acid + H(+). Functionally, heterodimer CA-CB: Crotoxin is a potent presynaptic neurotoxin that possesses phospholipase A2 (PLA2) activity and exerts a lethal action by blocking neuromuscular transmission. It consists of a non-covalent association of a basic and weakly toxic PLA2 subunit (CB), with a small acidic, non-enzymatic and non-toxic subunit (CA also named crotapotin). The complex acts by binding to a specific 48-kDa protein (R48) receptor located on presynaptic membranes, forming a transient ternary complex CA-CB-R48, followed by dissociation of the CA-CB complex and release of the CA subunit. At equilibrium, only the CB subunits remain associated with the specific crotoxin receptor. In addition to neurotoxicity, crotoxin has been found to exert nephrotoxicity, and cardiovascular toxicity. Moreover, anti-inflammatory, immunomodulatory, anti-tumor and analgesic effects of crotoxin have also been reported. Monomer CB: The basic subunit of crotoxin is a snake venom phospholipase A2 (PLA2) that exhibits weak neurotoxicity and strong anticoagulant effects by binding to factor Xa (F10) and inhibiting the prothrombinase activity. In addition, it exerts myotoxicity, nephrotoxicity, and cardiovascular toxicity as well as anti-inflammatory, immunomodulatory, anti-tumor and analgesic effects. Also shows a strong antimicrobial activity against X.axonopodis passiforae (Gram-negative) which is completely dependent on the enzymatic activity. PLA2 catalyzes the calcium-dependent hydrolysis of the 2- acyl groups in 3-sn-phosphoglycerides. In Crotalus durissus collilineatus (Brazilian rattlesnake), this protein is Phospholipase A2 crotoxin basic chain.